The chain runs to 316 residues: Ribose-phosphate pyrophosphokinase (316 aa).

ATP-binding positions include 40-42 (DGE) and 99-100 (RQ). Mg(2+) contacts are provided by His-133 and Asp-174. Lys-197 is a catalytic residue. D-ribose 5-phosphate-binding positions include Arg-199, Asp-223, and 227–231 (DTAGT).

This sequence belongs to the ribose-phosphate pyrophosphokinase family. Class I subfamily. As to quaternary structure, homohexamer. Requires Mg(2+) as cofactor.

It localises to the cytoplasm. The enzyme catalyses D-ribose 5-phosphate + ATP = 5-phospho-alpha-D-ribose 1-diphosphate + AMP + H(+). It functions in the pathway metabolic intermediate biosynthesis; 5-phospho-alpha-D-ribose 1-diphosphate biosynthesis; 5-phospho-alpha-D-ribose 1-diphosphate from D-ribose 5-phosphate (route I): step 1/1. Functionally, involved in the biosynthesis of the central metabolite phospho-alpha-D-ribosyl-1-pyrophosphate (PRPP) via the transfer of pyrophosphoryl group from ATP to 1-hydroxyl of ribose-5-phosphate (Rib-5-P). This chain is Ribose-phosphate pyrophosphokinase, found in Fusobacterium nucleatum subsp. nucleatum (strain ATCC 25586 / DSM 15643 / BCRC 10681 / CIP 101130 / JCM 8532 / KCTC 2640 / LMG 13131 / VPI 4355).